The primary structure comprises 217 residues: Ribosomal RNA small subunit methyltransferase G (217 aa).

Residues G78, F83, 129 to 130 (GE), and R146 each bind S-adenosyl-L-methionine.

Belongs to the methyltransferase superfamily. RNA methyltransferase RsmG family.

Its subcellular location is the cytoplasm. The catalysed reaction is guanosine(527) in 16S rRNA + S-adenosyl-L-methionine = N(7)-methylguanosine(527) in 16S rRNA + S-adenosyl-L-homocysteine. Specifically methylates the N7 position of guanine in position 527 of 16S rRNA. The chain is Ribosomal RNA small subunit methyltransferase G from Geobacter sulfurreducens (strain ATCC 51573 / DSM 12127 / PCA).